Consider the following 306-residue polypeptide: Agmatinase (306 aa).

Residues histidine 126, aspartate 149, histidine 151, aspartate 153, aspartate 230, and aspartate 232 each contribute to the Mn(2+) site.

It belongs to the arginase family. Agmatinase subfamily. It depends on Mn(2+) as a cofactor.

It catalyses the reaction agmatine + H2O = urea + putrescine. It participates in amine and polyamine biosynthesis; putrescine biosynthesis via agmatine pathway; putrescine from agmatine: step 1/1. In terms of biological role, catalyzes the formation of putrescine from agmatine. This chain is Agmatinase, found in Cronobacter sakazakii (strain ATCC BAA-894) (Enterobacter sakazakii).